A 349-amino-acid chain; its full sequence is Actin cytoskeleton-regulatory complex protein END3 (349 aa).

EH domains follow at residues 8–98 (EIKK…SKVN) and 130–222 (DLNQ…CNKK). The region spanning 40-75 (LDSSVLNKIWFLADIDDDDNLDFEEFVICMRLIFDM) is the EF-hand 1 domain. Residues aspartate 53, aspartate 55, aspartate 57, asparagine 59, and glutamate 64 each contribute to the Ca(2+) site. The polyphosphoinositide (PIP2)-binding stretch occupies residues 96–105 (KVNLIKERKK). Residues 146–164 (DGTITFNELSTKLSTKFFN) enclose the EF-hand 2 domain. Residues 226-265 (YDLRSSQPPTKRKEEANEVDNLRDNGQNSSSDSSGSNVLS) form a disordered region. A compositionally biased stretch (basic and acidic residues) spans 236–248 (KRKEEANEVDNLR). Residues 249-265 (DNGQNSSSDSSGSNVLS) show a composition bias toward low complexity. Phosphoserine is present on serine 276. 2 consecutive repeat copies span residues 276-295 (SLTDDQVANMREQLEGLLNY) and 315-334 (SITDDLDNIEQQVEVLENYL). A 2 X 20 AA approximate repeats region spans residues 276-334 (SLTDDQVANMREQLEGLLNYKKSEKTQGGSKLSKRINIRSITDDLDNIEQQVEVLENYL). Positions 307-349 (LSKRINIRSITDDLDNIEQQVEVLENYLNNKRHELQALQAEIN) form a coiled coil.

The protein belongs to the END3 family. As to quaternary structure, component of the PAN1 actin cytoskeleton-regulatory complex composed of at least END3, PAN1, and SLA1. Interacts with SCD5, SLA2 and YAP1802. Interacts directly with PAN1; the interaction with PAN1 is prevented by PAN1 phosphorylation by PKR1.

Its subcellular location is the cell membrane. The protein localises to the endosome membrane. It is found in the cytoplasm. It localises to the cytoskeleton. The protein resides in the actin patch. Functionally, component of the PAN1 actin cytoskeleton-regulatory complex required for the internalization of endosomes during actin-coupled endocytosis. The complex links the site of endocytosis to the cell membrane-associated actin cytoskeleton. Mediates uptake of external molecules and vacuolar degradation of plasma membrane proteins. Plays a role in the proper organization of the cell membrane-associated actin cytoskeleton and promotes its destabilization. END3 regulates PAN1 function by preventing phosphorylation of PAN1 by PKR1 and is also involved in the correct localization of SLA1 to the cell cortex, in the bipolar budding of diploid cells and the correct distribution of chitin at the cell surface. The sequence is that of Actin cytoskeleton-regulatory complex protein END3 (END3) from Saccharomyces cerevisiae (strain ATCC 204508 / S288c) (Baker's yeast).